Here is a 348-residue protein sequence, read N- to C-terminus: D-lactate dehydrogenase kk1H (348 aa).

Residues 158–159 (RI), Asp178, 208–209 (CP), 235–237 (TSR), and Asp261 each bind NAD(+). Arg237 is a catalytic residue. Glu266 is an active-site residue. The active-site Proton donor is the His298.

It belongs to the D-isomer specific 2-hydroxyacid dehydrogenase family.

It participates in secondary metabolite biosynthesis. In terms of biological role, D-lactate dehydrogenase; part of the gene cluster that mediates the biosynthesis of KK-1, a novel cyclic depsipeptide with 10 residues which is a promising active compound with high activity against many plant pathogens, especially Botrytis cinerea. Within the pathway, kk1H catalyzes in the synthesis of D-lactic acid from pyruvic acid, which is recognized by the A domain of the first kk1B module. The nonribosomal peptide synthetase (NRPS) kk1B catalyzes the elongation and cyclization of the decapeptide chain composed of 1 D-lactic acid residue (D-Lac), 1 pipecolic acid residue (Pip), 1 aspartic acid residue (Asp), 1 isoleucine residue (Ile), 1 glycine residue (Gly), 1 tyrosine residue (Tyr) and 4 valine residues (Val). The Asp, Ile and 3 Val residues are N-methylated by the 5 methyltransferase domains from the NRPS (found in modules 3, 5, 6, 7 and 9), whereas the Tyr residue is O-methylated by the cluster encoded O-methyltransferase kk1A. The thioesterase kk1J is likely to be involved in the corrective mechanism of peptide chain synthesis. The D-lactate dehydrogenase kk1H is involved in the synthesis of D-lactic acid from pyruvic acid, which is recognized by the A domain of the first kk1B module. The pyrroline-5-carboxylate reductase kk1I is involved in the synthesis of the L-pipecolic acid residue of KK-1 from delta-1-pyrroline-5-carboxylate (P5C), a metabolic intermediate of lysine. It still is unclear how kk1C and kk1D are involved in the production of KK-1. The chain is D-lactate dehydrogenase kk1H from Curvularia clavata.